The chain runs to 667 residues: MFVGTLVIIICTTLIIIIKKILKRKKEKLNLKESKKKKQDNERKNFEGLLTKKRVEVGDLKKEIEKLNKDKIELAKKLNCYIGDSSIPANGIREYDIIIDIPSVDYLSQSRKSWIIYVSNQLKQKMGSSNYNKKRPLHSLLKEYKKFSTLACLGVLNKGKTFFINKYNGTYLPSGTQAQTIGLSLSISSLNETITIDTAGSNTALQVCEDKTEEHLARKESTEMFICDMSFSLASIIVYVLNELTWNDQRFILALQSKIQSLRSESNIIKKLLVVHNYPKVNSQEELLSEIKTYIESPFNGNFHHHHVDIKKIESKEEIVLFFVESVNKTHHFFLCNDNSEFGKRYNQLTIEKIRTYKNYNDNLDLDKVLLTSLQNNMIPYCKSPKKLKITEHEPTINQINNNNSSNNKSQLEERPIADSLFQTQSFLHPSIDDTIQDNDKSGSEVSTPTISSSSSSPLQPIIKDEKDDNIENKSDEANTSLKYKPLFTSFGTDEYSKHLKELCKLHQMVSPHRSSIKQIPAFTISPEIDCNRENDFKLIANRIEIIGLNMVFSSGFKPFHDIVKVNSDLRYIIEVPQLEMEDIEFETKHLGSQWYLNIKGIKKLRYDSNDQTTVYPSNLTSLCPSQNQRRDGLFEFSLPIPTEYLPIKPAVSLDKGVITFKFEKIG.

Transmembrane regions (helical) follow at residues 2–22 (FVGTLVIIICTTLIIIIKKIL) and 224–244 (MFICDMSFSLASIIVYVLNEL). The stretch at 18-82 (IKKILKRKKE…ELAKKLNCYI (65 aa)) forms a coiled coil. Residues 432–478 (IDDTIQDNDKSGSEVSTPTISSSSSSPLQPIIKDEKDDNIENKSDEA) are disordered. The segment covering 444–457 (SEVSTPTISSSSSS) has biased composition (low complexity). Basic and acidic residues predominate over residues 463 to 477 (IKDEKDDNIENKSDE). The 117-residue stretch at 551-667 (MVFSSGFKPF…VITFKFEKIG (117 aa)) folds into the sHSP domain.

It belongs to the small heat shock protein (HSP20) family.

It localises to the membrane. In Dictyostelium discoideum (Social amoeba), this protein is Heat shock protein DDB_G0283913.